Here is a 298-residue protein sequence, read N- to C-terminus: Tyrosine recombinase XerC (298 aa).

Residues 1–84 form the Core-binding (CB) domain; sequence MNHIQEAFLN…TLRTFYEYWM (84 aa). Residues 105–286 form the Tyr recombinase domain; it reads YLPQFFYEEE…SNQQLRKVYL (182 aa). Residues arginine 145, lysine 169, histidine 238, arginine 241, and histidine 264 contribute to the active site. Tyrosine 273 functions as the O-(3'-phospho-DNA)-tyrosine intermediate in the catalytic mechanism.

The protein belongs to the 'phage' integrase family. XerC subfamily. As to quaternary structure, forms a cyclic heterotetrameric complex composed of two molecules of XerC and two molecules of XerD.

The protein localises to the cytoplasm. Site-specific tyrosine recombinase, which acts by catalyzing the cutting and rejoining of the recombining DNA molecules. The XerC-XerD complex is essential to convert dimers of the bacterial chromosome into monomers to permit their segregation at cell division. It also contributes to the segregational stability of plasmids. The chain is Tyrosine recombinase XerC from Staphylococcus aureus (strain JH1).